A 220-amino-acid chain; its full sequence is UPF0319 protein YccT (220 aa).

The first 20 residues, 1–20 (MKTGIVTTLIALCLPVSVFA), serve as a signal peptide directing secretion.

Belongs to the UPF0319 family.

In Escherichia coli (strain 55989 / EAEC), this protein is UPF0319 protein YccT.